Consider the following 227-residue polypeptide: Octanoyltransferase (227 aa).

Positions 34–212 constitute a BPL/LPL catalytic domain; it reads RQREDGLMLL…AFAEVFPVTW (179 aa). Substrate is bound by residues 76–83, 143–145, and 156–158; these read RGGEVTYH, AIA, and GFA. The active-site Acyl-thioester intermediate is the cysteine 174.

The protein belongs to the LipB family.

Its subcellular location is the cytoplasm. It carries out the reaction octanoyl-[ACP] + L-lysyl-[protein] = N(6)-octanoyl-L-lysyl-[protein] + holo-[ACP] + H(+). Its pathway is protein modification; protein lipoylation via endogenous pathway; protein N(6)-(lipoyl)lysine from octanoyl-[acyl-carrier-protein]: step 1/2. In terms of biological role, catalyzes the transfer of endogenously produced octanoic acid from octanoyl-acyl-carrier-protein onto the lipoyl domains of lipoate-dependent enzymes. Lipoyl-ACP can also act as a substrate although octanoyl-ACP is likely to be the physiological substrate. The polypeptide is Octanoyltransferase (Synechocystis sp. (strain ATCC 27184 / PCC 6803 / Kazusa)).